Reading from the N-terminus, the 428-residue chain is Enolase (428 aa).

Residue Gln-173 participates in (2R)-2-phosphoglycerate binding. The active-site Proton donor is Glu-217. Residues Asp-253, Glu-294, and Asp-320 each contribute to the Mg(2+) site. (2R)-2-phosphoglycerate contacts are provided by Lys-345, Arg-374, Ser-375, and Lys-396. Lys-345 serves as the catalytic Proton acceptor.

The protein belongs to the enolase family. Mg(2+) serves as cofactor.

It localises to the cytoplasm. Its subcellular location is the secreted. The protein localises to the cell surface. It catalyses the reaction (2R)-2-phosphoglycerate = phosphoenolpyruvate + H2O. Its pathway is carbohydrate degradation; glycolysis; pyruvate from D-glyceraldehyde 3-phosphate: step 4/5. Catalyzes the reversible conversion of 2-phosphoglycerate (2-PG) into phosphoenolpyruvate (PEP). It is essential for the degradation of carbohydrates via glycolysis. The protein is Enolase of Methanosarcina barkeri (strain Fusaro / DSM 804).